The following is a 429-amino-acid chain: CinA-like protein (429 aa).

This sequence belongs to the CinA family.

This is CinA-like protein from Chlorobium limicola (strain DSM 245 / NBRC 103803 / 6330).